A 624-amino-acid chain; its full sequence is Fibronectin type III domain-containing protein 2 (624 aa).

An N-terminal signal peptide occupies residues 1-19; that stretch reads MREQFSVLVISLLFSSSYG. 5 consecutive Fibronectin type-III domains span residues 131–236, 240–330, 334–430, 431–524, and 527–624; these read PPQN…TPDI, EPTN…TDVF, MPRF…TVPT, VPRE…PKRD, and VPPN…WPGR.

As to expression, prismatic layer of shell (at protein level).

The protein resides in the secreted. The polypeptide is Fibronectin type III domain-containing protein 2 (Margaritifera margaritifera (Freshwater pearl mussel)).